Consider the following 86-residue polypeptide: Cytochrome c oxidase subunit 6B1 (86 aa).

Alanine 2 is subject to N-acetylalanine. A CHCH domain is found at threonine 27–tryptophan 73. Residues cysteine 30–cysteine 40 carry the Cx9C motif motif. 2 cysteine pairs are disulfide-bonded: cysteine 30–cysteine 65 and cysteine 40–cysteine 54. Positions cysteine 54–cysteine 65 match the Cx10C motif motif. Residue lysine 62 is modified to N6-acetyllysine.

It belongs to the cytochrome c oxidase subunit 6B family. In terms of assembly, component of the cytochrome c oxidase (complex IV, CIV), a multisubunit enzyme composed of 14 subunits. The complex is composed of a catalytic core of 3 subunits MT-CO1, MT-CO2 and MT-CO3, encoded in the mitochondrial DNA, and 11 supernumerary subunits COX4I, COX5A, COX5B, COX6A, COX6B, COX6C, COX7A, COX7B, COX7C, COX8 and NDUFA4, which are encoded in the nuclear genome. The complex exists as a monomer or a dimer and forms supercomplexes (SCs) in the inner mitochondrial membrane with NADH-ubiquinone oxidoreductase (complex I, CI) and ubiquinol-cytochrome c oxidoreductase (cytochrome b-c1 complex, complex III, CIII), resulting in different assemblies (supercomplex SCI(1)III(2)IV(1) and megacomplex MCI(2)III(2)IV(2)).

It localises to the mitochondrion inner membrane. It participates in energy metabolism; oxidative phosphorylation. Component of the cytochrome c oxidase, the last enzyme in the mitochondrial electron transport chain which drives oxidative phosphorylation. The respiratory chain contains 3 multisubunit complexes succinate dehydrogenase (complex II, CII), ubiquinol-cytochrome c oxidoreductase (cytochrome b-c1 complex, complex III, CIII) and cytochrome c oxidase (complex IV, CIV), that cooperate to transfer electrons derived from NADH and succinate to molecular oxygen, creating an electrochemical gradient over the inner membrane that drives transmembrane transport and the ATP synthase. Cytochrome c oxidase is the component of the respiratory chain that catalyzes the reduction of oxygen to water. Electrons originating from reduced cytochrome c in the intermembrane space (IMS) are transferred via the dinuclear copper A center (CU(A)) of subunit 2 and heme A of subunit 1 to the active site in subunit 1, a binuclear center (BNC) formed by heme A3 and copper B (CU(B)). The BNC reduces molecular oxygen to 2 water molecules using 4 electrons from cytochrome c in the IMS and 4 protons from the mitochondrial matrix. This is Cytochrome c oxidase subunit 6B1 (COX6B1) from Carlito syrichta (Philippine tarsier).